A 423-amino-acid chain; its full sequence is MIDYKINEILVKQLNDDYNCSICVDPVLNSLPLEQHQALSCKNGHLLCQACWGKQLALRKECCICKIKVESISELCRNIFLEKGFRNKKVHCPNGFENFKVDEKLIKDESDGCKSVITIDQLESHLRECEFVFIECPNDPIRCKDKFRKNQTDKHMNKCQYVTINCEHCKEPVIKNDMPTHIENDCSIISLECEFCKDKFGRRSLENHIANECPNVVIDCPHKEGGCTARIKRCYLSQHLTEEDNHIRYMQKIIEKHRIQVEESDRIIKKLRVDYKELEKRVEITSRYKGNWTIENWSQKLTHYPNNERLKSPYFCIGSKSFYVGLYPNGFNQTNAGFMSIFLHLYEKPSTSTTVVRFSFELLHSDPTKSLKFEKSNKYTENKGSGFSQFIDIKMINNFIIDGKLTINIDVEVIPPSSSLVTK.

The segment at 20–66 (CSICVDPVLNSLPLEQHQALSCKNGHLLCQACWGKQLALRKECCICK) adopts an RING-type; degenerate zinc-finger fold. 2 consecutive TRAF-type zinc fingers follow at residues 124 to 179 (SHLR…NDMP) and 180 to 237 (THIE…CYLS). An MATH domain is found at 287 to 411 (RYKGNWTIEN…DGKLTINIDV (125 aa)).

The protein belongs to the TNF receptor-associated factor family. A subfamily.

It localises to the cytoplasm. Functionally, probable adapter protein and signal transducer that links members of the tumor necrosis factor receptor family to different signaling pathways by association with the receptor cytoplasmic domain and kinases. This Dictyostelium discoideum (Social amoeba) protein is TNF receptor-associated factor family protein DDB_G0277243.